The sequence spans 204 residues: Rho GDP-dissociation inhibitor 1 (204 aa).

The tract at residues Met1–Gln36 is disordered. Position 2 is an N-acetylalanine (Ala2). Ser34 is modified (phosphoserine). Lys43 carries the N6-acetyllysine modification. The residue at position 47 (Ser47) is a Phosphoserine. The tract at residues Asn66–Pro83 is hydrophobic. Ser101 is modified (phosphoserine; by PKA). At Lys105 the chain carries N6-acetyllysine. Phosphoserine; by PKC is present on Ser115. Lys127 bears the N6-acetyllysine mark. Residues Lys138 and Lys141 each participate in a glycyl lysine isopeptide (Lys-Gly) (interchain with G-Cter in SUMO1); alternate cross-link. Glycyl lysine isopeptide (Lys-Gly) (interchain with G-Cter in SUMO2); alternate cross-links involve residues Lys138 and Lys141. An N6-acetyllysine; alternate modification is found at Lys141. Position 141 is an N6-succinyllysine; alternate (Lys141). Lys178 is modified (N6-acetyllysine).

The protein belongs to the Rho GDI family. As to quaternary structure, monomer. Interacts with FER. Interacts with PLXNB3. Forms a heterodimer with RAC1. Interacts with RHOA, the affinity is increased by three orders of magnitude when RHOA is prenylated. Interacts with PSMD10; the interaction increases ARHGDIA association with RHOA, leading to ARHGDIA-mediated inactivation of RHOA and ROCK and prolonged AKT activation. Interacts with KANK2; the interaction is direct and may regulate the interaction of ARHGDIA with RHOA, RAC1 and CDC42. Interacts with RHOC. Interacts with CDC42. Interacts with NGFR (via death domain); NGFR binding decreases the affinity for RHOA. As to expression, brain, lung, thymus, spleen, small intestine, and kidney, and weakly in heart and liver.

It is found in the cytoplasm. Functionally, controls Rho proteins homeostasis. Regulates the GDP/GTP exchange reaction of the Rho proteins by inhibiting the dissociation of GDP from them, and the subsequent binding of GTP to them. Retains Rho proteins such as CDC42, RAC1 and RHOA in an inactive cytosolic pool, regulating their stability and protecting them from degradation. Actively involved in the recycling and distribution of activated Rho GTPases in the cell, mediates extraction from membranes of both inactive and activated molecules due its exceptionally high affinity for prenylated forms. Through the modulation of Rho proteins, may play a role in cell motility regulation. In glioma cells, inhibits cell migration and invasion by mediating the signals of SEMA5A and PLXNB3 that lead to inactivation of RAC1. This Bos taurus (Bovine) protein is Rho GDP-dissociation inhibitor 1 (ARHGDIA).